Consider the following 208-residue polypeptide: ATP synthase subunit b (208 aa).

The signal sequence occupies residues 1–27 (MVKAKKLVFKWSLLVFSFFTLSLFLVS). The N-palmitoyl cysteine moiety is linked to residue Cys28. Residue Cys28 is the site of S-diacylglycerol cysteine attachment. A helical membrane pass occupies residues 49–69 (WVFITHLLAFFILLTLMIFLF).

This sequence belongs to the ATPase B chain family. In terms of assembly, F-type ATPases have 2 components, F(1) - the catalytic core - and F(0) - the membrane proton channel. F(1) has five subunits: alpha(3), beta(3), gamma(1), delta(1), epsilon(1). F(0) has three main subunits: a(1), b(2) and c(10-14). The alpha and beta chains form an alternating ring which encloses part of the gamma chain. F(1) is attached to F(0) by a central stalk formed by the gamma and epsilon chains, while a peripheral stalk is formed by the delta and b chains.

It is found in the cell membrane. In terms of biological role, f(1)F(0) ATP synthase produces ATP from ADP in the presence of a proton or sodium gradient. F-type ATPases consist of two structural domains, F(1) containing the extramembraneous catalytic core and F(0) containing the membrane proton channel, linked together by a central stalk and a peripheral stalk. During catalysis, ATP synthesis in the catalytic domain of F(1) is coupled via a rotary mechanism of the central stalk subunits to proton translocation. Functionally, component of the F(0) channel, it forms part of the peripheral stalk, linking F(1) to F(0). This is ATP synthase subunit b from Mycoplasma genitalium (strain ATCC 33530 / DSM 19775 / NCTC 10195 / G37) (Mycoplasmoides genitalium).